The sequence spans 483 residues: Protein P55 (483 aa).

The chain crosses the membrane as a helical span at residues 342–359 (LTPVMALIIILVYYSIYG).

Its subcellular location is the host membrane. The chain is Protein P55 from Vitis vinifera (Grape).